The sequence spans 274 residues: Large ribosomal subunit protein uL2 (274 aa).

The interval 223–256 (VVMNPVDHPHGGGEGKTGEGRHPVDPWGNLTKGY) is disordered. Basic and acidic residues predominate over residues 229–246 (DHPHGGGEGKTGEGRHPV).

The protein belongs to the universal ribosomal protein uL2 family. In terms of assembly, part of the 50S ribosomal subunit. Forms a bridge to the 30S subunit in the 70S ribosome.

Its function is as follows. One of the primary rRNA binding proteins. Required for association of the 30S and 50S subunits to form the 70S ribosome, for tRNA binding and peptide bond formation. It has been suggested to have peptidyltransferase activity; this is somewhat controversial. Makes several contacts with the 16S rRNA in the 70S ribosome. This Variovorax paradoxus (strain S110) protein is Large ribosomal subunit protein uL2.